We begin with the raw amino-acid sequence, 342 residues long: GTPase Obg (342 aa).

Residues 1–159 form the Obg domain; the sequence is MQFIDQAKIE…KQLRLELKLL (159 aa). One can recognise an OBG-type G domain in the interval 160-330; that stretch reads AEVGIIGLPN…MLQEIWGILD (171 aa). GTP is bound by residues 166–173, 191–195, 213–216, 280–283, and 311–313; these read GLPNAGKS, FTTLI, DIPG, NKID, and SAV. 2 residues coordinate Mg(2+): S173 and T193.

The protein belongs to the TRAFAC class OBG-HflX-like GTPase superfamily. OBG GTPase family. Monomer. Mg(2+) is required as a cofactor.

The protein localises to the cytoplasm. Functionally, an essential GTPase which binds GTP, GDP and possibly (p)ppGpp with moderate affinity, with high nucleotide exchange rates and a fairly low GTP hydrolysis rate. Plays a role in control of the cell cycle, stress response, ribosome biogenesis and in those bacteria that undergo differentiation, in morphogenesis control. The polypeptide is GTPase Obg (Nostoc punctiforme (strain ATCC 29133 / PCC 73102)).